A 356-amino-acid chain; its full sequence is Probable neutral protease 2 homolog ARB_04769 (356 aa).

The N-terminal stretch at 1–17 (MQFTALLAALGAPLALA) is a signal peptide. The propeptide occupies 18 to 183 (ASIPAAAHNH…DDSTGVIDKR (166 aa)). Disulfide bonds link Cys191-Cys262 and Cys269-Cys287. Asn205 carries an N-linked (GlcNAc...) asparagine glycan. His311 lines the Zn(2+) pocket. Glu312 is an active-site residue. 2 residues coordinate Zn(2+): His315 and Asp326.

This sequence belongs to the peptidase M35 family. The cofactor is Zn(2+).

Its subcellular location is the secreted. The catalysed reaction is Preferential cleavage of bonds with hydrophobic residues in P1'. Also 3-Asn-|-Gln-4 and 8-Gly-|-Ser-9 bonds in insulin B chain.. In terms of biological role, probable secreted metalloprotease that shows high activities on basic nuclear substrates such as histone and protamine. May be involved in virulence. The chain is Probable neutral protease 2 homolog ARB_04769 from Arthroderma benhamiae (strain ATCC MYA-4681 / CBS 112371) (Trichophyton mentagrophytes).